Consider the following 2776-residue polypeptide: A-kinase anchor protein 13 (2776 aa).

Disordered stretches follow at residues 371–401, 452–518, 547–584, 618–641, 653–689, 760–871, 910–951, 995–1029, 1431–1508, 1527–1546, and 1565–1603; these read KNKD…SCLQ, EPDA…TETT, PAEA…QSSP, TMPG…PAQS, EAGT…ESTM, VSQT…SPTA, ALGQ…IPGL, GAAK…LPSG, LCDT…MDSI, PFRR…AEMN, and RRSF…FGGE. Residues 389-401 show a composition bias toward polar residues; that stretch reads DSGSASHQDSCLQ. The tract at residues 493-515 is important for interaction with PRKAR2A; sequence QNNKPQVGEGTKERLENSDSSTT. The segment covering 560 to 573 has biased composition (basic and acidic residues); the sequence is PTEKPGMETQERGC. Over residues 659-672 the composition is skewed to polar residues; the sequence is AEATHQPSTVTSSG. Residues 773–788 are compositionally biased toward low complexity; the sequence is SPPASSFSLASSPESE. S784 carries the phosphoserine modification. Residue T809 is modified to Phosphothreonine. Composition is skewed to basic and acidic residues over residues 820-834 and 914-940; these read DGPD…DKVG and DGKD…EDQR. A Phosphothreonine modification is found at T941. Residues 1005 to 1020 are compositionally biased toward polar residues; it reads TSLSADSKQKASSTEQ. Positions 1433–1444 are enriched in low complexity; that stretch reads DTTGSSSSTDDT. Positions 1454-1476 are enriched in polar residues; it reads GSDVSLPQTSKLNRSRNHQSANG. 5 positions are modified to phosphoserine: S1455, S1473, S1507, S1532, and S1569. The segment at 1552–1678 is important for interaction with MAP2K3; the sequence is RALGHVVRRP…SRPFHSTSAN (127 aa). Residues 1583–1594 show a composition bias toward low complexity; sequence SSSLEMSSANSS. Phosphoserine occurs at positions 1608, 1611, and 1613. K1637 is modified (N6-methyllysine). A disordered region spans residues 1711 to 1756; sequence TFSYIRNKMSSSKKSKEKEKEKDKIKEKEKDSKEKEKDKKTLNGHT. Over residues 1724–1751 the composition is skewed to basic and acidic residues; the sequence is KSKEKEKEKDKIKEKEKDSKEKEKDKKT. The Phorbol-ester/DAG-type zinc-finger motif lies at 1754 to 1801; it reads GHTFSPIPIVGPISCSQCMKPFTNKDAYTCAGCGAFVHKGCRENLASC. Residues S1839, S1858, and S1892 each carry the phosphoserine modification. The segment at 1882–2776 is interaction with ESR1; it reads MSNTWKFLSH…VPAEGEEIFC (895 aa). T1893 bears the Phosphothreonine mark. Phosphoserine is present on residues S1895 and S1908. One can recognise a DH domain in the interval 1957-2154; sequence KRQEVIYELM…KDVIGAVDSK (198 aa). The PH domain maps to 2194 to 2296; it reads KLVRDGSVFL…WIQIIQDTIN (103 aa). Residues S2308 and S2361 each carry the phosphoserine modification. Positions 2308–2345 form a coiled coil; sequence SENEEEKKLLDTKARELKEQLQQKDQQILLLLEEKEMI. The residue at position 2431 (T2431) is a Phosphothreonine. Positions 2436–2471 are disordered; the sequence is DCHQMNASKGGEKEEGDDGQDLRRTESDSGLKKGGN. Residues 2455-2466 show a composition bias toward basic and acidic residues; sequence QDLRRTESDSGL. Phosphoserine occurs at positions 2527 and 2530. The stretch at 2532–2646 forms a coiled coil; sequence LIEQEKQRSL…ERLSQRQMDQ (115 aa). Disordered regions lie at residues 2549-2605 and 2626-2776; these read ANLQ…EELQ and EREQ…EIFC. Basic and acidic residues-rich tracts occupy residues 2558-2605 and 2626-2640; these read HLEE…EELQ and EREQ…ERLS. Composition is skewed to polar residues over residues 2641–2653, 2665–2700, and 2713–2727; these read QRQM…QVSN, LPNS…SISR, and SASQ…SQAP. A phosphoserine mark is found at S2673 and S2692.

As to quaternary structure, interacts with the cAMP-dependent protein kinase (PKA) holoenzyme and with the regulatory subunit PRKAR2A. Interacts with RHOA. Also interacts with RHOB and RHOC. Identified in a ternary complex with RHOA and PRKAR2A. Identified in a complex with NR3C1 and RHOA. Interacts with BRAF and KSR1. Identified in a complex with BRAF and KSR1. Component of a signaling complex containing at least AKAP13, PKN1, MAPK14, ZAK and MAP2K3. Within this complex, AKAP13 interacts directly with PKN1, which in turn recruits MAPK14, MAP2K3 and ZAK. Interacts (phosphorylated form) with YWHAB and YWHAZ. Interaction with YWHAB inhibits activation of RHOA, interferes with PKN1 binding and activation of MAP kinases. Interacts with GNA12. Interacts with IKBKB. Interacts with ESR1, THRA, PPARA and NME2. Interacts (via the C-terminal domain after the PH domain) with MEF2C and RXRB. Interacts (via the C-terminal domain after the PH domain) with PRKD1. Detected in embryonic heart, limb bud, first branchial arch and forebrain (at protein level). Detected in heart. Detected in perichondrium, but not in the bone growth plate.

It is found in the cytoplasm. It localises to the cytosol. Its subcellular location is the cell cortex. The protein localises to the cytoskeleton. The protein resides in the nucleus. It is found in the membrane. Scaffold protein that plays an important role in assembling signaling complexes downstream of several types of G protein-coupled receptors. Activates RHOA in response to signaling via G protein-coupled receptors via its function as Rho guanine nucleotide exchange factor. May also activate other Rho family members. Part of a kinase signaling complex that links ADRA1A and ADRA1B adrenergic receptor signaling to the activation of downstream p38 MAP kinases, such as MAPK11 and MAPK14. Part of a signaling complex that links ADRA1B signaling to the activation of RHOA and IKBKB/IKKB, leading to increased NF-kappa-B transcriptional activity. Part of a RHOA-dependent signaling cascade that mediates responses to lysophosphatidic acid (LPA), a signaling molecule that activates G-protein coupled receptors and potentiates transcriptional activation of the glucocorticoid receptor NR3C1. Part of a signaling cascade that stimulates MEF2C-dependent gene expression in response to lysophosphatidic acid (LPA). Part of a signaling pathway that activates MAPK11 and/or MAPK14 and leads to increased transcription activation of the estrogen receptors ESR1 and ESR2. Part of a signaling cascade that links cAMP and EGFR signaling to BRAF signaling and to PKA-mediated phosphorylation of KSR1, leading to the activation of downstream MAP kinases, such as MAPK1 or MAPK3. Functions as a scaffold protein that anchors cAMP-dependent protein kinase (PKA) and PRKD1. This promotes activation of PRKD1, leading to increased phosphorylation of HDAC5 and ultimately cardiomyocyte hypertrophy. Has no guanine nucleotide exchange activity on CDC42, Ras or Rac. Required for normal embryonic heart development, and in particular for normal sarcomere formation in the developing cardiomyocytes. Plays a role in cardiomyocyte growth and cardiac hypertrophy in response to activation of the beta-adrenergic receptor by phenylephrine or isoproterenol. Required for normal adaptive cardiac hypertrophy in response to pressure overload. Plays a role in osteogenesis. This Mus musculus (Mouse) protein is A-kinase anchor protein 13.